The following is a 1095-amino-acid chain: DNA-directed RNA polymerase subunit beta (1095 aa).

The interval 1069-1095 (DLMQDVNPRRSTPSRPTYESLGKEYEE) is disordered.

Belongs to the RNA polymerase beta chain family. In terms of assembly, in cyanobacteria the RNAP catalytic core is composed of 2 alpha, 1 beta, 1 beta', 1 gamma and 1 omega subunit. When a sigma factor is associated with the core the holoenzyme is formed, which can initiate transcription.

The enzyme catalyses RNA(n) + a ribonucleoside 5'-triphosphate = RNA(n+1) + diphosphate. DNA-dependent RNA polymerase catalyzes the transcription of DNA into RNA using the four ribonucleoside triphosphates as substrates. The sequence is that of DNA-directed RNA polymerase subunit beta from Prochlorococcus marinus (strain NATL2A).